A 55-amino-acid polypeptide reads, in one-letter code: Large ribosomal subunit protein bL33 (55 aa).

This sequence belongs to the bacterial ribosomal protein bL33 family.

In Jannaschia sp. (strain CCS1), this protein is Large ribosomal subunit protein bL33.